The sequence spans 218 residues: MSHGDTIRVDASVRAKCGTGSARALRAAGLIPAVVYGKNRDAVNISLSHADFLKKCRTLPIFSQLIKLCIDGKEEFALTKEIQKHPVSGAVSHVDFQFVDRGAEIKVEVPLVFLNEQKCAGVKLGGALNILHRSLLIRCAPDAIPQSLEVDLLDLAIGHSIHVSDLALPETMQVAMKEENPVVASVSATAAVEEAKEDGAPEESAQGQGAAEAQETGK.

Positions 187–218 (SATAAVEEAKEDGAPEESAQGQGAAEAQETGK) are disordered. A compositionally biased stretch (low complexity) spans 202 to 218 (EESAQGQGAAEAQETGK).

This sequence belongs to the bacterial ribosomal protein bL25 family. CTC subfamily. As to quaternary structure, part of the 50S ribosomal subunit; part of the 5S rRNA/L5/L18/L25 subcomplex. Contacts the 5S rRNA. Binds to the 5S rRNA independently of L5 and L18.

This is one of the proteins that binds to the 5S RNA in the ribosome where it forms part of the central protuberance. This Anaplasma marginale (strain Florida) protein is Large ribosomal subunit protein bL25.